The following is a 30-amino-acid chain: Photosystem I reaction center subunit XII (30 aa).

Residues 7-29 (LIAFFLAFTAGILAIKLGQALYD) form a helical membrane-spanning segment.

The protein belongs to the PsaM family.

It localises to the plastid. The protein localises to the chloroplast thylakoid membrane. In Pinus thunbergii (Japanese black pine), this protein is Photosystem I reaction center subunit XII.